The sequence spans 1109 residues: Zinc finger E-box-binding homeobox 1 (1109 aa).

Disordered stretches follow at residues 1–106 (MADG…DPNV) and 123–143 (PEEDQRQGTPEASGHDDNGTP). Residues 15-30 (PRRNNVTNYNTVVEAN) show a composition bias toward low complexity. 2 positions are modified to phosphoserine: Ser31 and Ser33. Positions 87–98 (VKDDECDSDAEN) are enriched in acidic residues. The segment at 150–173 (LTCPYCDRGYKRFTSLKEHIKYRH) adopts a C2H2-type 1 zinc-finger fold. Glycyl lysine isopeptide (Lys-Gly) (interchain with G-Cter in SUMO2) cross-links involve residues Lys166 and Lys175. C2H2-type zinc fingers lie at residues 180–202 (FSCSLCSYTFAYRTQLERHMTSH) and 220–242 (FKCTECGKAFKYKHHLKEHLRIH). The segment at 248–272 (YECPNCKKRFSHSGSYSSHISSKKC) adopts a C2H2-type 4; atypical zinc-finger fold. The tract at residues 278–307 (VNGRPRSGLKTSQCSSPSLSTSPGSPTRPQ) is disordered. Lys287 participates in a covalent cross-link: Glycyl lysine isopeptide (Lys-Gly) (interchain with G-Cter in SUMO2). Low complexity predominate over residues 288–304 (TSQCSSPSLSTSPGSPT). 2 positions are modified to phosphoserine: Ser293 and Ser302. Glycyl lysine isopeptide (Lys-Gly) (interchain with G-Cter in SUMO2) cross-links involve residues Lys311 and Lys315. Lys327 participates in a covalent cross-link: Glycyl lysine isopeptide (Lys-Gly) (interchain with G-Cter in SUMO); alternate. Lys327 participates in a covalent cross-link: Glycyl lysine isopeptide (Lys-Gly) (interchain with G-Cter in SUMO2); alternate. Residues Lys419, Lys473, Lys484, Lys495, and Lys528 each participate in a glycyl lysine isopeptide (Lys-Gly) (interchain with G-Cter in SUMO2) cross-link. Disordered regions lie at residues 468-501 (VPQNLKKENPAPPKSCKSEKSPEDLTVKSEKDKS), 525-566 (PELK…SQPP), and 614-711 (QIPG…PQVE). Positions 483–501 (CKSEKSPEDLTVKSEKDKS) are enriched in basic and acidic residues. A DNA-binding region (homeobox; atypical) is located at residues 559-618 (DLSPSQPPLKNLLSLLKAYYALNAQPSTEELTKIADSVNLPLDVVKKWFEKMQAGQIPGQ). The span at 654–665 (RGQSPLKMTSSP) shows a compositional bias: polar residues. Ser657, Ser664, Ser671, and Ser678 each carry phosphoserine. Polar residues predominate over residues 673-703 (INGSRSCTSSPSPLNLSSARNPQGYSCVSEG). At Thr680 the chain carries Phosphothreonine. The residue at position 682 (Ser682) is a Phosphoserine. A Glycyl lysine isopeptide (Lys-Gly) (interchain with G-Cter in SUMO); alternate cross-link involves residue Lys752. Lys752 is covalently cross-linked (Glycyl lysine isopeptide (Lys-Gly) (interchain with G-Cter in SUMO2); alternate). The interval 834–873 (PPVKVIQPNGNQDERQDTSSEGVSVEDQNDSDCTPPKKKT) is disordered. 2 C2H2-type zinc fingers span residues 881–903 (YACDLCDKIFQKSSSLLRHKYEH) and 909–931 (HECGICRKAFKHKHHLIEHMRLH). The segment at 937–958 (YQCDKCGKRFSHSGSYSQHMNH) adopts a C2H2-type 7; atypical zinc-finger fold. Residues 968–1109 (EDRDAMEQED…RLSEEKTNEA (142 aa)) are disordered. The span at 1012 to 1066 (EEDEDSEKEEEEEDKEMEELQEDKECENPQEEEEEEEEEEEEEEEEEEEEAEEAE) shows a compositional bias: acidic residues. A compositionally biased stretch (low complexity) spans 1071 to 1087 (AAKTGGAVEEEAAQQAG). Over residues 1097–1109 (ESKRLSEEKTNEA) the composition is skewed to basic and acidic residues.

This sequence belongs to the delta-EF1/ZFH-1 C2H2-type zinc-finger family. Interacts (via N-terminus) with SMARCA4/BRG1. Ubiquitinated, leading to degradation in a proteasome-dependent manner. Deubiquitinated by USP51, leading to stabilization.

The protein localises to the nucleus. In terms of biological role, acts as a transcriptional repressor. Binds to E-box sequences in the immunoglobulin heavy chain enhancer as well as in the regulatory regions of many other tissue-specific genes. Represses E-cadherin promoter and induces an epithelial-mesenchymal transition (EMT) by recruiting SMARCA4/BRG1. Represses BCL6 transcription in the presence of the corepressor CTBP1. Positively regulates neuronal differentiation. Represses RCOR1 transcription activation during neurogenesis. Represses transcription by binding to the E box (5'-CANNTG-3'). In the absence of TGFB1, acts as a repressor of COL1A2 transcription via binding to the E-box in the upstream enhancer region. The polypeptide is Zinc finger E-box-binding homeobox 1 (Rattus norvegicus (Rat)).